Here is a 228-residue protein sequence, read N- to C-terminus: Ribose-5-phosphate isomerase A (228 aa).

Residues 27-30, 86-89, and 100-103 contribute to the substrate site; these read TGTT, DGAD, and KGMG. Residue Glu-109 is the Proton acceptor of the active site. Residue Lys-127 participates in substrate binding.

The protein belongs to the ribose 5-phosphate isomerase family. Homodimer.

The enzyme catalyses aldehydo-D-ribose 5-phosphate = D-ribulose 5-phosphate. It functions in the pathway carbohydrate degradation; pentose phosphate pathway; D-ribose 5-phosphate from D-ribulose 5-phosphate (non-oxidative stage): step 1/1. Catalyzes the reversible conversion of ribose-5-phosphate to ribulose 5-phosphate. This chain is Ribose-5-phosphate isomerase A, found in Borreliella afzelii (strain PKo) (Borrelia afzelii).